Reading from the N-terminus, the 139-residue chain is Insulin-like growth factor (139 aa).

Positions 1–38 (YIRRVRQGSIYSLLVESQQWCKLTLTLLLLLALLTRCT) are cleaved as a signal peptide. Residues 39–67 (LSETLCGSELVDTLQFVCDDRGFFFVPQH) are b. The tract at residues 68 to 82 (VPPRRGAHRRSRARK) is c. The a stretch occupies residues 83 to 103 (GIVEECCFKGCSLRLLEMYCA). Residues 104-113 (RPSKAERDVA) are d. The disordered stretch occupies residues 108–139 (AERDVARPRQRPHRASQHSRRGSQSRGRGRSR). The e stretch occupies residues 114–139 (RPRQRPHRASQHSRRGSQSRGRGRSR). A compositionally biased stretch (basic residues) spans 115 to 139 (PRQRPHRASQHSRRGSQSRGRGRSR).

This sequence belongs to the insulin family.

Its subcellular location is the secreted. The insulin-like growth factors, isolated from plasma, are structurally and functionally related to insulin but have a much higher growth-promoting activity. The chain is Insulin-like growth factor from Myxine glutinosa (Atlantic hagfish).